The chain runs to 475 residues: E3 ubiquitin-protein ligase TRIM62 (475 aa).

An RING-type zinc finger spans residues 11–54 (CSICLSIYQDPVSLGCEHYFCRRCITEHWVRQEAQGARDCPECR). The B box-type zinc-finger motif lies at 88–128 (RAARPCQAHDKVKLFCLTDRALLCFFCDEPALHEQHQVTGI). C93, H96, C114, and H120 together coordinate Zn(2+). Residues 127–241 (GIDDAFDELQ…LQERLAETDR (115 aa)) are a coiled coil. Residues 277–475 (PLQYTIWKSL…QPLRINTVRI (199 aa)) form the B30.2/SPRY domain.

The protein belongs to the TRIM/RBCC family. As to quaternary structure, interacts with the ubiquitin-conjugating enzyme, UBE2D2. Post-translationally, polyubiquitinated, autoubiquitinated in the presence of UBE2D2.

It is found in the cytoplasm. The catalysed reaction is S-ubiquitinyl-[E2 ubiquitin-conjugating enzyme]-L-cysteine + [acceptor protein]-L-lysine = [E2 ubiquitin-conjugating enzyme]-L-cysteine + N(6)-ubiquitinyl-[acceptor protein]-L-lysine.. Its pathway is protein modification; protein ubiquitination. Functionally, E3 ubiquitin ligase that plays a role in antifungal immunity by mediating 'Lys-27'-linked ubiquitination of CARD9 downstream of C-type lectin receptors; leading to CARD9 activation, followed by activation of NF-kappa-B and MAP kinase p38 pathways. E3 ubiquitin ligase activity is dependent on E2 ubiquitin-conjugating enzyme UBE2D2. In Homo sapiens (Human), this protein is E3 ubiquitin-protein ligase TRIM62.